Here is a 29-residue protein sequence, read N- to C-terminus: Beta-hexatoxin-Mr1a (29 aa).

Cystine bridges form between C2–C16, C9–C21, and C15–C26.

Belongs to the neurotoxin 15 family. 01 (magi-5) subfamily. As to expression, expressed by the venom gland.

Its subcellular location is the secreted. In terms of biological role, insect and vertebrate active toxin. Binds at site 4 of mammalian voltage-gated sodium channels and shifts the activation voltage of the mammalian rNav1.2a (SCN2A) channel to more hyperpolarized voltages, whereas the insect channel, DmNav1 (para), is not affected. Causes temporary paralysis when injected into lepidopteran larvae at 8.6 nmol/g. A low intracranial injection dose into mice causes lacrimation, closure of the eyes and sweating. A high injection dose causes extensive lacrimation and death. The chain is Beta-hexatoxin-Mr1a from Macrothele raveni (Funnel-web spider).